We begin with the raw amino-acid sequence, 823 residues long: Putative ankyrin repeat domain-containing protein 20A2 (823 aa).

ANK repeat units lie at residues 66–95 (QHRT…QIDV), 99–128 (ENRT…NPNL), 132–161 (YGNT…HIEA), 165–194 (DNNT…SSHA), and 198–227 (LRRS…DVFA). Disordered regions lie at residues 301 to 343 (VPEK…EVED) and 355 to 402 (VQTL…LSEN). Positions 372 to 384 (QERHERSEKKQPQ) are enriched in basic and acidic residues. Coiled-coil stretches lie at residues 431–480 (KKLK…KQLE), 565–724 (EMIT…NNST), and 776–805 (LVLE…EKTE).

This Homo sapiens (Human) protein is Putative ankyrin repeat domain-containing protein 20A2.